Reading from the N-terminus, the 303-residue chain is Probable cell division protein WhiA (303 aa).

Residues 272 to 303 (SIQQLADSLSTPLTKSGVNHRLRKINKIADEL) constitute a DNA-binding region (H-T-H motif).

This sequence belongs to the WhiA family.

In terms of biological role, involved in cell division and chromosome segregation. The chain is Probable cell division protein WhiA from Streptococcus pneumoniae serotype 2 (strain D39 / NCTC 7466).